Reading from the N-terminus, the 709-residue chain is Golgin-84 (709 aa).

Over 1-664 (MASWLKVAED…RATRFLWRHP (664 aa)) the chain is Cytoplasmic. 3 disordered regions span residues 24-132 (TELS…VVDR), 144-195 (EVEV…NQDA), and 211-265 (EVIH…DQLE). Residues 29–43 (EQSSPQPSGSSSQEG) show a composition bias toward low complexity. Over residues 78–89 (PPRERIKIEKIR) the composition is skewed to basic and acidic residues. Over residues 94 to 113 (VDSSSVDASASKPDVSSSDV) the composition is skewed to low complexity. Positions 114-132 (KGLDDDGGAEKEEKVVVDR) are enriched in basic and acidic residues. Positions 162 to 180 (DGAADSGNSEGAAESSAPS) are enriched in low complexity. 2 stretches are compositionally biased toward basic and acidic residues: residues 211–222 (EVIHEKNIKEVP) and 248–265 (QQEH…DQLE). The stretch at 287–592 (RVCAGLSSRL…AALEFQLEKS (306 aa)) forms a coiled coil. A helical; Signal-anchor for type II membrane protein membrane pass occupies residues 665–684 (VARVSLLFYLVFVHLFLMYL). Over 685–707 (MHRLQDFASREGPTAMGGLANSD) the chain is Lumenal.

Its subcellular location is the golgi apparatus membrane. Functionally, may be involved in maintaining Golgi structure and in intra-Golgi transport. The polypeptide is Golgin-84 (Oryza sativa subsp. japonica (Rice)).